Reading from the N-terminus, the 360-residue chain is D-xylose 1-dehydrogenase [NADP(+)] (360 aa).

It belongs to the Gfo/Idh/MocA family. Homotretramer.

The catalysed reaction is D-xylofuranose + NADP(+) = D-xylono-1,4-lactone + NADPH + H(+). Its function is as follows. NADP-dependent D-xylose dehydrogenase involved in the degradation of D-xylose, a major component of hemicelluloses such as xylan. In addition to D-xylose, oxidizes D-ribose at similar kinetic constants, whereas D-glucose is oxidized with about 70-fold lower catalytic efficiency. The sequence is that of D-xylose 1-dehydrogenase [NADP(+)] (gfo6) from Haloarcula marismortui (strain ATCC 43049 / DSM 3752 / JCM 8966 / VKM B-1809) (Halobacterium marismortui).